A 60-amino-acid polypeptide reads, in one-letter code: MACPKKKTSKSKRSMRRAAWKRQAALQAQRALSIGKSILTERAQGFYFPEAEEENEDEQE.

The segment covering 1-20 (MACPKKKTSKSKRSMRRAAW) has biased composition (basic residues). The disordered stretch occupies residues 1–22 (MACPKKKTSKSKRSMRRAAWKR).

The protein belongs to the bacterial ribosomal protein bL32 family.

This Thermosynechococcus vestitus (strain NIES-2133 / IAM M-273 / BP-1) protein is Large ribosomal subunit protein bL32.